A 1130-amino-acid chain; its full sequence is ABC transporter ATM1 (1130 aa).

A mitochondrion-targeting transit peptide spans 1-65 (MQPPTRAPFF…ESFHSSAFQL (65 aa)). Disordered regions lie at residues 191–212 (DAWT…CVRP), 276–315 (HHAP…RNMS), and 341–385 (STFS…TSSP). Composition is skewed to polar residues over residues 195 to 206 (SGCSGQTDNATA) and 305 to 315 (GSLTLSPRNMS). The helical transmembrane segment at 406–426 (PNPTSLQLLFSLFPFLWPTAL) threads the bilayer. Positions 468–502 (PLSPSGASPSSGDTSLLASSGETSSSLSPSAAPAE) are enriched in low complexity. Positions 468 to 554 (PLSPSGASPS…AGKAGTSVGG (87 aa)) are disordered. Over residues 503-523 (GAREAGKSGESAGRERRDEGS) the composition is skewed to basic and acidic residues. Transmembrane regions (helical) follow at residues 574–594 (IVSV…AATG), 653–673 (VLLF…YLLG), 678–698 (GPVA…TAAV), 761–781 (LAFL…GSLA), and 791–811 (LLPV…AVPL). Residues 587-823 (VARIAATGFN…VGTIYRETSL (237 aa)) enclose the ABC transmembrane type-1 domain. The ABC transporter domain occupies 857–1111 (VAFENVRFAY…ERGLYRALWE (255 aa)). 910–917 (GPSGVGKS) contributes to the ATP binding site.

Belongs to the ABC transporter superfamily. ABCB family. Heavy Metal importer (TC 3.A.1.210) subfamily. As to quaternary structure, homodimer.

It localises to the mitochondrion membrane. Probably transports iron-sulfur clusters in an ATP-dependent manner. Plays a role in [Fe-S] proteins homeostasis. Required for optimal parasite growth and lytic cycle. The protein is ABC transporter ATM1 of Toxoplasma gondii (strain ATCC 50611 / Me49).